Reading from the N-terminus, the 483-residue chain is Chromosomal replication initiator protein DnaA (483 aa).

The tract at residues 1–71 (MKEFWQTCVS…EALAAEWYQR (71 aa)) is domain I, interacts with DnaA modulators. The tract at residues 71–145 (RPVQVQFELP…DAANIVYERS (75 aa)) is domain II. The segment at 146–362 (RLNTDLTFEN…GALRKVLAYA (217 aa)) is domain III, AAA+ region. Residues Gly-190, Gly-192, Lys-193, and Thr-194 each contribute to the ATP site. The interval 363–483 (RFHGREALNV…LHVLEQTLKG (121 aa)) is domain IV, binds dsDNA.

The protein belongs to the DnaA family. Oligomerizes as a right-handed, spiral filament on DNA at oriC.

The protein resides in the cytoplasm. In terms of biological role, plays an essential role in the initiation and regulation of chromosomal replication. ATP-DnaA binds to the origin of replication (oriC) to initiate formation of the DNA replication initiation complex once per cell cycle. Binds the DnaA box (a 9 base pair repeat at the origin) and separates the double-stranded (ds)DNA. Forms a right-handed helical filament on oriC DNA; dsDNA binds to the exterior of the filament while single-stranded (ss)DNA is stabiized in the filament's interior. The ATP-DnaA-oriC complex binds and stabilizes one strand of the AT-rich DNA unwinding element (DUE), permitting loading of DNA polymerase. After initiation quickly degrades to an ADP-DnaA complex that is not apt for DNA replication. Binds acidic phospholipids. This Bordetella avium (strain 197N) protein is Chromosomal replication initiator protein DnaA.